We begin with the raw amino-acid sequence, 126 residues long: Protein ApaG (126 aa).

The ApaG domain maps to 2-126 (TSLEDSIKVE…FRLAVPGMLH (125 aa)).

The chain is Protein ApaG from Shewanella sediminis (strain HAW-EB3).